The chain runs to 130 residues: Small ribosomal subunit protein uS9 (130 aa).

The protein belongs to the universal ribosomal protein uS9 family.

The polypeptide is Small ribosomal subunit protein uS9 (Acidovorax ebreus (strain TPSY) (Diaphorobacter sp. (strain TPSY))).